A 228-amino-acid chain; its full sequence is Abnormal cell migration protein 18 (228 aa).

The N-terminal stretch at 1–19 (MTFTLRLLVLCTVYSYVIS) is a signal peptide. N-linked (GlcNAc...) asparagine glycans are attached at residues Asn-135 and Asn-159.

As to expression, expressed in body wall muscle.

It localises to the secreted. The protein localises to the extracellular space. The protein resides in the extracellular matrix. It is found in the basement membrane. Required for the directional control of distal tip cell migration during gonadogenesis, probably by recruiting fibulin fbl-1 to the gonad basement membrane. In Caenorhabditis elegans, this protein is Abnormal cell migration protein 18.